The following is a 92-amino-acid chain: MTYSRKKNPFVANNLLKKINKLNRKAKKEIIITWSRGSTIIPIMIGHTIAIHNGKEHLPIYIMDDMVGHKLGEFAATLNFRGHEKGDNKSRR.

Belongs to the universal ribosomal protein uS19 family.

Its subcellular location is the plastid. Functionally, protein S19 forms a complex with S13 that binds strongly to the 16S ribosomal RNA. This is Small ribosomal subunit protein uS19c from Cuscuta obtusiflora (Peruvian dodder).